Here is a 198-residue protein sequence, read N- to C-terminus: Ribonuclease HII (198 aa).

The 192-residue stretch at 3 to 194 (RRVCGVDEAG…VKRCLALGQQ (192 aa)) folds into the RNase H type-2 domain. A divalent metal cation-binding residues include Asp9, Glu10, and Asp101.

The protein belongs to the RNase HII family. Mn(2+) serves as cofactor. Requires Mg(2+) as cofactor.

The protein resides in the cytoplasm. It catalyses the reaction Endonucleolytic cleavage to 5'-phosphomonoester.. Endonuclease that specifically degrades the RNA of RNA-DNA hybrids. This is Ribonuclease HII from Laribacter hongkongensis (strain HLHK9).